Here is a 245-residue protein sequence, read N- to C-terminus: Octanoyltransferase (245 aa).

A BPL/LPL catalytic domain is found at 54 to 242 (KTAHEQVWLL…AFEKIFGPTI (189 aa)). Substrate is bound by residues 93–100 (RGGEFTYH), 173–175 (AIG), and 186–188 (GVS). Cys-204 (acyl-thioester intermediate) is an active-site residue.

This sequence belongs to the LipB family.

It is found in the cytoplasm. It carries out the reaction octanoyl-[ACP] + L-lysyl-[protein] = N(6)-octanoyl-L-lysyl-[protein] + holo-[ACP] + H(+). The protein operates within protein modification; protein lipoylation via endogenous pathway; protein N(6)-(lipoyl)lysine from octanoyl-[acyl-carrier-protein]: step 1/2. Catalyzes the transfer of endogenously produced octanoic acid from octanoyl-acyl-carrier-protein onto the lipoyl domains of lipoate-dependent enzymes. Lipoyl-ACP can also act as a substrate although octanoyl-ACP is likely to be the physiological substrate. The chain is Octanoyltransferase from Bartonella tribocorum (strain CIP 105476 / IBS 506).